The following is a 378-amino-acid chain: Spermatogenic leucine zipper protein 1 (378 aa).

The interval 1–31 (MSDTDNSAEMPARCPSPNPAPGAKQEPPNSG) is disordered. Serine 106 bears the Phosphoserine mark. An interaction with PPP1CC isoform gamma-2 region spans residues 116-122 (KNKIRFK). Positions 116 to 127 (KNKIRFKDDLFI) are helix-loop-helix motif. Residues 128 to 193 (HFDPEREQNT…HLRGEYRKLR (66 aa)) form a basic motif region. Residues 182–233 (SLHLRGEYRKLRNNMEQLLQEADHWSKQHNELSELMRSYQECQNETQETTDK) adopt a coiled-coil conformation. A Phosphoserine modification is found at serine 207. The tract at residues 252-273 (LEEQVKKLSHDTHALHLIAALL) is leucine-zipper.

In terms of assembly, interacts with PPP1CC isoform gamma-2. This interaction can prevent SPZ1 binding to the E-box and inhibits PPP1CC activity. In terms of processing, phosphorylated by MAPK1/ERK2 and MAPK3/ERK1. As to expression, expressed specifically in the testis and epidydimis. In the testis expressed in both germ cells and somatic cells (Sertoli and Leydig cells). Expressed in several tumor cell lines.

It localises to the cytoplasm. Its subcellular location is the nucleus. Functionally, transcription factor that binds to the DNA sequence 5'-CANNTG-3'(E box) and the G-box motif. Directly binds to a guanine-rich region of the PCNA promoter and up-regulates its expression which in turn induces cell transformation and tumor formation. May play an important role in the regulation of cell proliferation and differentiation during spermatogenesis. This chain is Spermatogenic leucine zipper protein 1 (Spz1), found in Mus musculus (Mouse).